The sequence spans 207 residues: Hepatic lectin (207 aa).

M1 is subject to N-acetylmethionine. Residues 1–23 lie on the Cytoplasmic side of the membrane; that stretch reads MDEERLSDNVRLYKGGSIRQGLR. The chain crosses the membrane as a helical; Signal-anchor for type II membrane protein span at residues 24–48; the sequence is SFAAVYVLLALSFLLLTLLSSVSLA. The Extracellular portion of the chain corresponds to 49-207; it reads RIAALSSKLS…YYVCEKPLPK (159 aa). An N-linked (GlcNAc...) asparagine glycan is attached at N67. A C-type lectin domain is found at 77-203; that stretch reads PCGAQSRQWE…TYECYYVCEK (127 aa). 3 disulfides stabilise this stretch: C78–C92, C109–C201, and C179–C193.

Some or all of the cysteines are involved in disulfide bonds.

The protein localises to the membrane. Hepatic lectin is a membrane receptor protein that recognizes and binds exposed N-acetylglucosamine moieties of plasma glycoproteins, thus mediating their clearance (from the circulation) and endocytosis. This is Hepatic lectin from Gallus gallus (Chicken).